Here is a 2026-residue protein sequence, read N- to C-terminus: Fatty acid synthase subunit beta (2026 aa).

The interval 148 to 526 is acetyltransferase (AT) domain; sequence ILMAFGGQGS…VDGRGVRIIA (379 aa). Ser-268 acts as the For acetyltransferase activity in catalysis. The segment at 579-824 is enoyl reductase (ER) domain; it reads SQLLQAPPII…LILAAAGVAD (246 aa). Positions 1130–1604 are dehydratase (DH) domain; that stretch reads SQVTGSVRSA…LPGDQLTVRI (475 aa). The MaoC-like domain maps to 1512-1625; it reads PGLIDNGSRT…LSVAAYREGT (114 aa). A malonyl/palmitoyl transferase (MT/PT) domain region spans residues 1643 to 2016; it reads YLFTGQGSQA…LEEAAAVTGS (374 aa). Catalysis depends on Ser-1788, which acts as the For malonyltransferase activity.

It belongs to the fungal fatty acid synthetase subunit beta family. [Alpha(6)beta(6)] hexamers of two multifunctional subunits (alpha and beta).

It carries out the reaction acetyl-CoA + n malonyl-CoA + 2n NADPH + 4n H(+) = a long-chain-acyl-CoA + n CoA + n CO2 + 2n NADP(+).. The enzyme catalyses holo-[ACP] + acetyl-CoA = acetyl-[ACP] + CoA. It catalyses the reaction holo-[ACP] + malonyl-CoA = malonyl-[ACP] + CoA. The catalysed reaction is a (3R)-hydroxyacyl-[ACP] = a (2E)-enoyl-[ACP] + H2O. It carries out the reaction a 2,3-saturated acyl-[ACP] + NAD(+) = a (2E)-enoyl-[ACP] + NADH + H(+). The enzyme catalyses (9Z)-octadecenoyl-[ACP] + H2O = (9Z)-octadecenoate + holo-[ACP] + H(+). Its pathway is secondary metabolite biosynthesis. Fatty acid synthase beta subunit; part of the gene cluster that mediates the biosynthesis of oryzines, natural products with an unusual maleidride backbone. The two subunits of the fungal fatty acid synthase oryfasA and oryfasB probably form octenoic acid. This fatty acid is most likely activated by the acyl-CoA ligase oryP to give octenyl-CoA before the citrate synthase-like protein oryE catalyzes condensation with oxaloacetate to form tricarboxylic acid. The next steps of the pathways are conjectural, but a favorite possible route has been proposed, beginning with decarboxylation and concomitant dehydration by the decarboxylase oryM, followed by tautomerization, which may lead to the production of a diene intermediate. Reduction of this diene intermediate could give the known metabolite piliformic acid. On the pathway to oryzine B and oryzine A, however, hydroxylation of the diene by the alpha-ketoglutarate-dependent dioxygenase oryG and lactonisation by the lactonohydrolases oryH or oryL could give oryzine B directly. Finally, enoyl reduction by the dehydrogenase oryD would then convert oryzine B into oryzine A. This chain is Fatty acid synthase subunit beta, found in Aspergillus oryzae (strain ATCC 42149 / RIB 40) (Yellow koji mold).